The primary structure comprises 119 residues: Large ribosomal subunit protein bL20 (119 aa).

The protein belongs to the bacterial ribosomal protein bL20 family.

Binds directly to 23S ribosomal RNA and is necessary for the in vitro assembly process of the 50S ribosomal subunit. It is not involved in the protein synthesizing functions of that subunit. In Rhodospirillum centenum (strain ATCC 51521 / SW), this protein is Large ribosomal subunit protein bL20.